Consider the following 154-residue polypeptide: UPF0178 protein SPO3827 (154 aa).

This sequence belongs to the UPF0178 family.

The chain is UPF0178 protein SPO3827 from Ruegeria pomeroyi (strain ATCC 700808 / DSM 15171 / DSS-3) (Silicibacter pomeroyi).